Here is a 690-residue protein sequence, read N- to C-terminus: Eukaryotic translation initiation factor 3 subunit B (690 aa).

The disordered stretch occupies residues 1–37 (MAKKKSEEQSSADANDSDYQEEPNFEDPPGFVDNISD). Residues 15 to 25 (NDSDYQEEPNF) show a composition bias toward acidic residues. In terms of domain architecture, RRM spans 57–141 (SVVVVDNIPK…HTFAVNLFTD (85 aa)). WD repeat units lie at residues 207–246 (TRER…KIQK), 293–331 (DGMS…LLDL), 334–369 (IKIP…TLME), 442–484 (EIRE…KPSL), and 530–575 (PDHF…IKRT). The stretch at 595–645 (EEKQKEIKKNLKKYYAAFEQKDRLRLTRASKELLEKRSQLRETFMEYRNKR) forms a coiled coil.

The protein belongs to the eIF-3 subunit B family. As to quaternary structure, component of the eukaryotic translation initiation factor 3 (eIF-3) complex. The eIF-3 complex interacts with pix. Interacts with mxt.

Its subcellular location is the cytoplasm. Its function is as follows. RNA-binding component of the eukaryotic translation initiation factor 3 (eIF-3) complex, which is involved in protein synthesis of a specialized repertoire of mRNAs and, together with other initiation factors, stimulates binding of mRNA and methionyl-tRNAi to the 40S ribosome. The eIF-3 complex specifically targets and initiates translation of a subset of mRNAs involved in cell proliferation. The chain is Eukaryotic translation initiation factor 3 subunit B from Drosophila sechellia (Fruit fly).